A 202-amino-acid polypeptide reads, in one-letter code: Molybdenum cofactor guanylyltransferase (202 aa).

GTP contacts are provided by residues 9–11 (LAG), lysine 22, aspartate 70, and aspartate 96. Aspartate 96 serves as a coordination point for Mg(2+).

This sequence belongs to the MobA family. Monomer. Requires Mg(2+) as cofactor.

The protein localises to the cytoplasm. It catalyses the reaction Mo-molybdopterin + GTP + H(+) = Mo-molybdopterin guanine dinucleotide + diphosphate. Its function is as follows. Transfers a GMP moiety from GTP to Mo-molybdopterin (Mo-MPT) cofactor (Moco or molybdenum cofactor) to form Mo-molybdopterin guanine dinucleotide (Mo-MGD) cofactor. This is Molybdenum cofactor guanylyltransferase from Desulfosudis oleivorans (strain DSM 6200 / JCM 39069 / Hxd3) (Desulfococcus oleovorans).